The sequence spans 252 residues: NADP-dependent (R)-specific alcohol dehydrogenase (252 aa).

Residues 16–19, 39–40, 63–64, Asn90, Tyr156, Lys160, and 191–195 each bind NADP(+); these read TLGI, RH, DA, and IKTPL. Tyr156 acts as the Proton donor/acceptor in catalysis. Position 252 (Gln252) interacts with Mg(2+).

It belongs to the short-chain dehydrogenases/reductases (SDR) family. As to quaternary structure, homotetramer. Mg(2+) is required as a cofactor.

It catalyses the reaction a secondary alcohol + NADP(+) = a ketone + NADPH + H(+). It carries out the reaction acetophenone + NADPH + H(+) = (R)-1-phenylethanol + NADP(+). The enzyme catalyses 2,5-hexanedione + 2 NADPH + 2 H(+) = (2R,5R)-hexanediol + 2 NADP(+). The catalysed reaction is ethyl 3-oxobutanoate + NADPH + H(+) = ethyl (R)-3-hydroxybutanoate + NADP(+). It catalyses the reaction 2-octanone + NADPH + H(+) = (2R)-octan-2-ol + NADP(+). NADP-dependent (R)-specific alcohol dehydrogenase (ADH) with a broad substrate specificity, able to catalyze in vitro the stereoselective reduction of several aliphatic and aromatic ketones as well as beta-keto esters to the corresponding enantiomerically pure alcohols. The polypeptide is NADP-dependent (R)-specific alcohol dehydrogenase (Lentilactobacillus kefiri (Lactobacillus kefiri)).